The primary structure comprises 352 residues: N-acetyl-gamma-glutamyl-phosphate reductase (352 aa).

Residue Cys-158 is part of the active site.

This sequence belongs to the NAGSA dehydrogenase family. Type 1 subfamily.

The protein resides in the cytoplasm. It carries out the reaction N-acetyl-L-glutamate 5-semialdehyde + phosphate + NADP(+) = N-acetyl-L-glutamyl 5-phosphate + NADPH + H(+). It functions in the pathway amino-acid biosynthesis; L-arginine biosynthesis; N(2)-acetyl-L-ornithine from L-glutamate: step 3/4. Its function is as follows. Catalyzes the NADPH-dependent reduction of N-acetyl-5-glutamyl phosphate to yield N-acetyl-L-glutamate 5-semialdehyde. The sequence is that of N-acetyl-gamma-glutamyl-phosphate reductase from Mycobacterium bovis (strain BCG / Tokyo 172 / ATCC 35737 / TMC 1019).